The chain runs to 576 residues: Acetylcholine receptor subunit alpha-like 2 (576 aa).

An N-terminal signal peptide occupies residues M1–R21. Topologically, residues H22–T261 are extracellular. The N-linked (GlcNAc...) asparagine glycan is linked to N65. 2 disulfide bridges follow: C169/C183 and C243/C244. N-linked (GlcNAc...) asparagine glycosylation occurs at N254. 3 helical membrane passes run L262 to L285, I293 to S311, and Y327 to L346. At N347–R526 the chain is on the cytoplasmic side. The chain crosses the membrane as a helical span at residues L527–G545. N570 carries an N-linked (GlcNAc...) asparagine glycan.

Belongs to the ligand-gated ion channel (TC 1.A.9) family. Acetylcholine receptor (TC 1.A.9.1) subfamily. CNS in embryos.

The protein localises to the postsynaptic cell membrane. Its subcellular location is the cell membrane. Its function is as follows. After binding acetylcholine, the AChR responds by an extensive change in conformation that affects all subunits and leads to opening of an ion-conducting channel across the plasma membrane. The polypeptide is Acetylcholine receptor subunit alpha-like 2 (nAChRalpha2) (Drosophila melanogaster (Fruit fly)).